Here is a 378-residue protein sequence, read N- to C-terminus: Quinolinate synthase (378 aa).

Residues His-59 and Ser-80 each contribute to the iminosuccinate site. Cys-125 is a binding site for [4Fe-4S] cluster. Residues Tyr-151–Asn-153 and Ser-168 contribute to the iminosuccinate site. Residue Cys-212 participates in [4Fe-4S] cluster binding. Iminosuccinate is bound by residues His-238–Glu-240 and Thr-255. A [4Fe-4S] cluster-binding site is contributed by Cys-309.

The protein belongs to the quinolinate synthase family. Type 1 subfamily. [4Fe-4S] cluster serves as cofactor.

It localises to the cytoplasm. It carries out the reaction iminosuccinate + dihydroxyacetone phosphate = quinolinate + phosphate + 2 H2O + H(+). It functions in the pathway cofactor biosynthesis; NAD(+) biosynthesis; quinolinate from iminoaspartate: step 1/1. Functionally, catalyzes the condensation of iminoaspartate with dihydroxyacetone phosphate to form quinolinate. This is Quinolinate synthase from Burkholderia lata (strain ATCC 17760 / DSM 23089 / LMG 22485 / NCIMB 9086 / R18194 / 383).